Reading from the N-terminus, the 449-residue chain is UDP-N-acetylglucosamine 1-carboxyvinyltransferase (449 aa).

A compositionally biased stretch (basic and acidic residues) spans 1 to 12 (MQVTVNEHDAVE). The disordered stretch occupies residues 1–30 (MQVTVNEHDAVERVATATPAGNREAHAHGT). A phosphoenolpyruvate-binding site is contributed by 51–52 (KN). Arg121 contributes to the UDP-N-acetyl-alpha-D-glucosamine binding site. Catalysis depends on Cys145, which acts as the Proton donor. Cys145 is subject to 2-(S-cysteinyl)pyruvic acid O-phosphothioketal. UDP-N-acetyl-alpha-D-glucosamine is bound by residues 150–154 (RPVDQ), Asp333, and Ile355.

This sequence belongs to the EPSP synthase family. MurA subfamily.

The protein localises to the cytoplasm. The catalysed reaction is phosphoenolpyruvate + UDP-N-acetyl-alpha-D-glucosamine = UDP-N-acetyl-3-O-(1-carboxyvinyl)-alpha-D-glucosamine + phosphate. Its pathway is cell wall biogenesis; peptidoglycan biosynthesis. Functionally, cell wall formation. Adds enolpyruvyl to UDP-N-acetylglucosamine. The protein is UDP-N-acetylglucosamine 1-carboxyvinyltransferase of Burkholderia pseudomallei (strain 1710b).